The chain runs to 408 residues: Putative ankyrin repeat protein L483 (408 aa).

11 ANK repeats span residues 78–107, 108–137, 139–167, 168–197, 198–227, 229–257, 259–287, 288–317, 318–347, 349–377, and 378–407; these read SLNK…DIKA, GDDC…NIRA, NDYA…DIRA, NNDY…NIRT, ENDY…DIRA, NDYA…NIRV, NDYA…NIRA, RCDF…DIRS, QNDY…DIRT, DDYA…NIRA, and KDDY…VLTK.

This chain is Putative ankyrin repeat protein L483, found in Acanthamoeba polyphaga (Amoeba).